The following is a 248-amino-acid chain: PACRG-like protein (248 aa).

N-acetylmethionine is present on M1. The interval 1 to 72 (MQRSECSGGV…NPKTINPFGE (72 aa)) is disordered. Polar residues-rich tracts occupy residues 14-29 (NRATGSNDQRTSSSTQ) and 36-45 (VQRSKSSSLT). S47 is modified (phosphoserine).

This Mus musculus (Mouse) protein is PACRG-like protein (Pacrgl).